The chain runs to 96 residues: MAEARSKISFEDALVELEQIAEKLERQDFSLEESLKAYERGMELKKICRGILDSAEGKIEALTKDESQKTNKTGFRTESKSTSQTSSDSVLEEDLF.

Residues 61–79 (ALTKDESQKTNKTGFRTES) are compositionally biased toward basic and acidic residues. Residues 61-96 (ALTKDESQKTNKTGFRTESKSTSQTSSDSVLEEDLF) are disordered. Over residues 80–89 (KSTSQTSSDS) the composition is skewed to low complexity.

It belongs to the XseB family. In terms of assembly, heterooligomer composed of large and small subunits.

The protein resides in the cytoplasm. It catalyses the reaction Exonucleolytic cleavage in either 5'- to 3'- or 3'- to 5'-direction to yield nucleoside 5'-phosphates.. Its function is as follows. Bidirectionally degrades single-stranded DNA into large acid-insoluble oligonucleotides, which are then degraded further into small acid-soluble oligonucleotides. In Leptospira borgpetersenii serovar Hardjo-bovis (strain JB197), this protein is Exodeoxyribonuclease 7 small subunit.